The sequence spans 185 residues: MIDKEKIKEGMKLILEAIGEDVNREGLIETPDRIARMYEEIFSGIGMNAKEHLSKTFEVHSNDLVLEKDITFYSMCEHHLVPFYGKVHIAYIPNGRVVGLSKLARCVEVYSKKPQLQERLTKEIADSIMEYLDAQGVMVVVEGEHMCMTMRGVRKPGAKTVTTTYRGKFLEDESLKNDVFRMISM.

The Zn(2+) site is built by C76, H79, and C147.

Belongs to the GTP cyclohydrolase I family. In terms of assembly, toroid-shaped homodecamer, composed of two pentamers of five dimers.

The catalysed reaction is GTP + H2O = 7,8-dihydroneopterin 3'-triphosphate + formate + H(+). Its pathway is cofactor biosynthesis; 7,8-dihydroneopterin triphosphate biosynthesis; 7,8-dihydroneopterin triphosphate from GTP: step 1/1. In Clostridium perfringens (strain 13 / Type A), this protein is GTP cyclohydrolase 1.